We begin with the raw amino-acid sequence, 222 residues long: MPNYTLYYFNGRGRAEICRMLMAAAGVQYTDKRFEFNEWDKYRNDMPSMCVPVLDIDGQNKMPETMAIARYLARENGYYGKNNMDMFRIDYICDCFYEILHDYMRYFHTKNGRFMQGSGTDMSPDMDPTQMTSYIQNRYLDTCRRILSFLERTLEMRNGGKEFFMGDQMMLCDMMCYCCLENPMLEDQTTFNNFPKLMSLWKRVASHPKITPYLKKRNNTNW.

The 79-residue stretch at 2–80 (PNYTLYYFNG…YLARENGYYG (79 aa)) folds into the GST N-terminal domain. Residues 82–222 (NNMDMFRIDY…YLKKRNNTNW (141 aa)) form the GST C-terminal domain.

The protein belongs to the GST superfamily. Lens.

Functionally, S-crystallins are structural components of squids and octopi eye lens. Contains relatively little if any GST activity. The protein is S-crystallin SL20-1 of Nototodarus sloanii (Wellington flying squid).